A 315-amino-acid chain; its full sequence is Ribose-phosphate pyrophosphokinase (315 aa).

ATP is bound by residues 37–39 (DGE) and 96–97 (RQ). 2 residues coordinate Mg(2+): H131 and D170. K194 is an active-site residue. Residues R196, D220, and 224–228 (DTGGT) contribute to the D-ribose 5-phosphate site.

Belongs to the ribose-phosphate pyrophosphokinase family. Class I subfamily. As to quaternary structure, homohexamer. Mg(2+) serves as cofactor.

The protein resides in the cytoplasm. The enzyme catalyses D-ribose 5-phosphate + ATP = 5-phospho-alpha-D-ribose 1-diphosphate + AMP + H(+). Its pathway is metabolic intermediate biosynthesis; 5-phospho-alpha-D-ribose 1-diphosphate biosynthesis; 5-phospho-alpha-D-ribose 1-diphosphate from D-ribose 5-phosphate (route I): step 1/1. Functionally, involved in the biosynthesis of the central metabolite phospho-alpha-D-ribosyl-1-pyrophosphate (PRPP) via the transfer of pyrophosphoryl group from ATP to 1-hydroxyl of ribose-5-phosphate (Rib-5-P). The sequence is that of Ribose-phosphate pyrophosphokinase from Buchnera aphidicola subsp. Acyrthosiphon pisum (strain APS) (Acyrthosiphon pisum symbiotic bacterium).